Here is a 353-residue protein sequence, read N- to C-terminus: Nicotinate-nucleotide--dimethylbenzimidazole phosphoribosyltransferase (353 aa).

The Proton acceptor role is filled by glutamate 318.

Belongs to the CobT family.

It carries out the reaction 5,6-dimethylbenzimidazole + nicotinate beta-D-ribonucleotide = alpha-ribazole 5'-phosphate + nicotinate + H(+). Its pathway is nucleoside biosynthesis; alpha-ribazole biosynthesis; alpha-ribazole from 5,6-dimethylbenzimidazole: step 1/2. In terms of biological role, catalyzes the synthesis of alpha-ribazole-5'-phosphate from nicotinate mononucleotide (NAMN) and 5,6-dimethylbenzimidazole (DMB). This chain is Nicotinate-nucleotide--dimethylbenzimidazole phosphoribosyltransferase, found in Chloroflexus aggregans (strain MD-66 / DSM 9485).